The sequence spans 491 residues: Glutamyl-tRNA(Gln) amidotransferase subunit A (491 aa).

Catalysis depends on charge relay system residues Lys-79 and Ser-154. Ser-178 functions as the Acyl-ester intermediate in the catalytic mechanism.

Belongs to the amidase family. GatA subfamily. In terms of assembly, heterotrimer of A, B and C subunits.

The catalysed reaction is L-glutamyl-tRNA(Gln) + L-glutamine + ATP + H2O = L-glutaminyl-tRNA(Gln) + L-glutamate + ADP + phosphate + H(+). Allows the formation of correctly charged Gln-tRNA(Gln) through the transamidation of misacylated Glu-tRNA(Gln) in organisms which lack glutaminyl-tRNA synthetase. The reaction takes place in the presence of glutamine and ATP through an activated gamma-phospho-Glu-tRNA(Gln). This Synechococcus sp. (strain CC9605) protein is Glutamyl-tRNA(Gln) amidotransferase subunit A.